The sequence spans 432 residues: Enolase (432 aa).

Glutamine 163 serves as a coordination point for (2R)-2-phosphoglycerate. Glutamate 205 serves as the catalytic Proton donor. Mg(2+) contacts are provided by aspartate 242, glutamate 289, and aspartate 316. 4 residues coordinate (2R)-2-phosphoglycerate: lysine 341, arginine 370, serine 371, and lysine 392. Lysine 341 functions as the Proton acceptor in the catalytic mechanism.

This sequence belongs to the enolase family. The cofactor is Mg(2+). Post-translationally, probably phosphorylated.

The protein localises to the cytoplasm. It is found in the secreted. It localises to the cell surface. The catalysed reaction is (2R)-2-phosphoglycerate = phosphoenolpyruvate + H2O. The protein operates within carbohydrate degradation; glycolysis; pyruvate from D-glyceraldehyde 3-phosphate: step 4/5. Catalyzes the reversible conversion of 2-phosphoglycerate (2-PG) into phosphoenolpyruvate (PEP). It is essential for the degradation of carbohydrates via glycolysis. In terms of biological role, 'Moonlights' as a plasminogen receptor. Binds plasminogen and human salivary mucin MG2 when expressed on the bacterial cell surface, potentially allowing the bacterium to acquire surface-associated proteolytic activity that may help the dissemination through oral tissues and entrance into the blood stream. The sequence is that of Enolase from Streptococcus mutans serotype c (strain ATCC 700610 / UA159).